Reading from the N-terminus, the 565-residue chain is Molybdenum cofactor biosynthesis protein 1 (565 aa).

A molybdenum cofactor biosynthesis protein A region spans residues 3-367; that stretch reads LLARHAIRLL…AVQRKKKQHA (365 aa). One can recognise a Radical SAM core domain in the interval 64–276; sequence SFGRHHTYLR…LQIIRQRWPD (213 aa). Position 73 (R73) interacts with GTP. C80 and C84 together coordinate [4Fe-4S] cluster. S-adenosyl-L-methionine is bound at residue Y86. C87 is a [4Fe-4S] cluster binding site. R123 contributes to the GTP binding site. Residue G127 coordinates S-adenosyl-L-methionine. GTP is bound at residue T154. S178 is a binding site for S-adenosyl-L-methionine. Residue K214 participates in GTP binding. Residue M248 participates in S-adenosyl-L-methionine binding. C311 and C314 together coordinate [4Fe-4S] cluster. 316–318 is a binding site for GTP; it reads RLR. C328 provides a ligand contact to [4Fe-4S] cluster. D525 acts as the For molybdenum cofactor biosynthesis protein C activity in catalysis.

It in the C-terminal section; belongs to the MoaC family. In the N-terminal section; belongs to the radical SAM superfamily. MoaA family. In terms of assembly, isoform Mocs1a and isoform Mocs1b probably form a heterooligomer. [4Fe-4S] cluster is required as a cofactor.

The enzyme catalyses GTP + AH2 + S-adenosyl-L-methionine = (8S)-3',8-cyclo-7,8-dihydroguanosine 5'-triphosphate + 5'-deoxyadenosine + L-methionine + A + H(+). The catalysed reaction is (8S)-3',8-cyclo-7,8-dihydroguanosine 5'-triphosphate = cyclic pyranopterin phosphate + diphosphate. It functions in the pathway cofactor biosynthesis; molybdopterin biosynthesis. Its function is as follows. Isoform Mocs1a and isoform Mocs1b probably form a complex that catalyzes the conversion of 5'-GTP to cyclic pyranopterin monophosphate (cPMP). Mocs1a catalyzes the cyclization of GTP to (8S)-3',8-cyclo-7,8-dihydroguanosine 5'-triphosphate and Mocs1b catalyzes the subsequent conversion of (8S)-3',8-cyclo-7,8-dihydroguanosine 5'-triphosphate to cPMP. This is Molybdenum cofactor biosynthesis protein 1 (Mocs1) from Drosophila melanogaster (Fruit fly).